A 592-amino-acid chain; its full sequence is Aspartate--tRNA(Asp/Asn) ligase (592 aa).

Position 175 (E175) interacts with L-aspartate. An aspartate region spans residues 199–202 (QLFK). R221 lines the L-aspartate pocket. Residues 221-223 (RDE) and Q230 each bind ATP. H450 serves as a coordination point for L-aspartate. An ATP-binding site is contributed by E483. R490 is a binding site for L-aspartate. 535–538 (GLDR) is an ATP binding site.

The protein belongs to the class-II aminoacyl-tRNA synthetase family. Type 1 subfamily. As to quaternary structure, homodimer.

The protein resides in the cytoplasm. It catalyses the reaction tRNA(Asx) + L-aspartate + ATP = L-aspartyl-tRNA(Asx) + AMP + diphosphate. Its function is as follows. Aspartyl-tRNA synthetase with relaxed tRNA specificity since it is able to aspartylate not only its cognate tRNA(Asp) but also tRNA(Asn). Reaction proceeds in two steps: L-aspartate is first activated by ATP to form Asp-AMP and then transferred to the acceptor end of tRNA(Asp/Asn). This chain is Aspartate--tRNA(Asp/Asn) ligase, found in Acinetobacter baylyi (strain ATCC 33305 / BD413 / ADP1).